Here is an 876-residue protein sequence, read N- to C-terminus: Leucine--tRNA ligase (876 aa).

The 'HIGH' region signature appears at 43-53 (PYPSGRIHMGH). A 'KMSKS' region motif is present at residues 632–636 (KMSKS). An ATP-binding site is contributed by Lys635.

The protein belongs to the class-I aminoacyl-tRNA synthetase family.

It localises to the cytoplasm. The catalysed reaction is tRNA(Leu) + L-leucine + ATP = L-leucyl-tRNA(Leu) + AMP + diphosphate. This chain is Leucine--tRNA ligase, found in Agrobacterium fabrum (strain C58 / ATCC 33970) (Agrobacterium tumefaciens (strain C58)).